Here is a 430-residue protein sequence, read N- to C-terminus: Adenylosuccinate synthetase (430 aa).

Residues 12 to 18 (GDEGKGK) and 40 to 42 (GHT) each bind GTP. The active-site Proton acceptor is the Asp-13. Mg(2+)-binding residues include Asp-13 and Gly-40. IMP contacts are provided by residues 13–16 (DEGK), 38–41 (NAGH), Thr-129, Arg-143, Gln-224, Thr-239, and Arg-303. His-41 serves as the catalytic Proton donor. 299-305 (ATTGRRR) is a binding site for substrate. GTP is bound by residues Arg-305, 331–333 (KLD), and 413–415 (SVG).

The protein belongs to the adenylosuccinate synthetase family. In terms of assembly, homodimer. Requires Mg(2+) as cofactor.

The protein resides in the cytoplasm. It carries out the reaction IMP + L-aspartate + GTP = N(6)-(1,2-dicarboxyethyl)-AMP + GDP + phosphate + 2 H(+). It functions in the pathway purine metabolism; AMP biosynthesis via de novo pathway; AMP from IMP: step 1/2. Functionally, plays an important role in the de novo pathway of purine nucleotide biosynthesis. Catalyzes the first committed step in the biosynthesis of AMP from IMP. This Desulfatibacillum aliphaticivorans protein is Adenylosuccinate synthetase.